Here is a 746-residue protein sequence, read N- to C-terminus: Protein O-mannosyl-transferase 1 (746 aa).

Helical transmembrane passes span 30–50 (PLVVTVDINLNLVALTGLGLL), 90–110 (FGHMLLALGGWLGGFDGNFLW), 121–141 (VPIWSLRLLPALAGALSVPMA), 144–164 (IVLELHFSHGAAIGAALLMLI), 176–196 (LLESILIFFNLLAVLSYLKFF), 228–248 (MGIFTYLLVLGIAAVHAWNLI), and 266–286 (IVALLVVPVFLYLLFFYVHLM). MIR domains lie at 318–381 (PLEV…VKDP), 392–449 (PRPV…LDIV), and 453–513 (SNRD…VEEH). Residues Asn-435, Asn-471, and Asn-539 are each glycosylated (N-linked (GlcNAc...) asparagine). 3 helical membrane passes run 597-617 (IVIWTSASLATVVYTLLFFWY), 636-656 (WVLAGALCTGGWALNYLPFFL), and 660-680 (VLFLYHYLPALTFQILLLPIV).

The protein belongs to the glycosyltransferase 39 family.

Its subcellular location is the endoplasmic reticulum membrane. It carries out the reaction a di-trans,poly-cis-dolichyl beta-D-mannosyl phosphate + L-seryl-[protein] = 3-O-(alpha-D-mannosyl)-L-seryl-[protein] + a di-trans,poly-cis-dolichyl phosphate + H(+). The catalysed reaction is a di-trans,poly-cis-dolichyl beta-D-mannosyl phosphate + L-threonyl-[protein] = 3-O-(alpha-D-mannosyl)-L-threonyl-[protein] + a di-trans,poly-cis-dolichyl phosphate + H(+). It participates in protein modification; protein glycosylation. Functionally, transfers mannosyl residues to the hydroxyl group of serine or threonine residues. Coexpression of both POMT1 and POMT2 is necessary for enzyme activity, expression of either POMT1 or POMT2 alone is insufficient. Essentially dedicated to O-mannosylation of alpha-DAG1 and few other proteins but not of cadherins and protocaherins. The chain is Protein O-mannosyl-transferase 1 (Pomt1) from Mus musculus (Mouse).